We begin with the raw amino-acid sequence, 410 residues long: MSGATKDVKKVVLAYSGGLDTSVILKWLQETYGCEVVTFTADLGQGEELEPARKKAEMLGVKEIYIEDLREEFVRDFVFPMFRANAVYEGVYLLGTSIARPLIAKRQIEIARQTGADAVCHGSTGKGNDQVRFELGYAALNPEIKIIAPWREWDLTSRTKLIEFAEKHQIPIAKDKRGEAPFSVDANLLHISAEGKVLEDPADEAPEYVYSRSVRPEDAPDTPTYVEVGFEKGDAVSIDGVKMSPATLLTKLNELGGANGIGRLDLVENRFVGMKSRGVYETPGGTVLLVAHRAMESITLDRGAAHLKDELMPRYAELIYNGFWWSPEREMLQALIDKSQEMVTGSVRLKLYKGMATVVGRSSPYSLYSMAHVTFEEDAGAYDQKDAAGFIRLNALRLRLLAARNNRTKK.

Residues 14–22 (AYSGGLDTS) and Ala-41 each bind ATP. Positions 92 and 97 each coordinate L-citrulline. Gly-122 provides a ligand contact to ATP. L-aspartate-binding residues include Thr-124, Asn-128, and Asp-129. An L-citrulline-binding site is contributed by Asn-128. Arg-132, Ser-183, Ser-192, Glu-268, and Tyr-280 together coordinate L-citrulline.

This sequence belongs to the argininosuccinate synthase family. Type 1 subfamily. In terms of assembly, homotetramer.

The protein localises to the cytoplasm. It catalyses the reaction L-citrulline + L-aspartate + ATP = 2-(N(omega)-L-arginino)succinate + AMP + diphosphate + H(+). The protein operates within amino-acid biosynthesis; L-arginine biosynthesis; L-arginine from L-ornithine and carbamoyl phosphate: step 2/3. This Parvibaculum lavamentivorans (strain DS-1 / DSM 13023 / NCIMB 13966) protein is Argininosuccinate synthase.